The following is a 272-amino-acid chain: Cyclase-like protein 2 (272 aa).

The signal sequence occupies residues 1 to 24 (MAVPPLFFLLTLLSLPSLLISAGA).

The protein belongs to the Cyclase 1 superfamily.

Its subcellular location is the secreted. The protein resides in the extracellular space. It localises to the extracellular matrix. In terms of biological role, may function redundantly with CYCLASE1 for normal plant growth, development and viability. This Arabidopsis thaliana (Mouse-ear cress) protein is Cyclase-like protein 2.